The following is a 101-amino-acid chain: Acylphosphatase (101 aa).

In terms of domain architecture, Acylphosphatase-like spans 15–101 (RMYARVYGLV…KGEFEDFETY (87 aa)). Residues Arg30 and Asn48 contribute to the active site.

Belongs to the acylphosphatase family.

The catalysed reaction is an acyl phosphate + H2O = a carboxylate + phosphate + H(+). This is Acylphosphatase (acyP) from Saccharolobus solfataricus (strain ATCC 35092 / DSM 1617 / JCM 11322 / P2) (Sulfolobus solfataricus).